We begin with the raw amino-acid sequence, 406 residues long: 3-oxoacyl-[acyl-carrier-protein] synthase 1 (406 aa).

Residues 1 to 405 (MRRVVITGIG…GTNVSLIVKK (405 aa)) form the Ketosynthase family 3 (KS3) domain. Residues Cys-164, His-299, and His-335 each act as for beta-ketoacyl synthase activity in the active site.

The protein belongs to the thiolase-like superfamily. Beta-ketoacyl-ACP synthases family. As to quaternary structure, homodimer.

It localises to the cytoplasm. The enzyme catalyses a fatty acyl-[ACP] + malonyl-[ACP] + H(+) = a 3-oxoacyl-[ACP] + holo-[ACP] + CO2. The catalysed reaction is (3Z)-decenoyl-[ACP] + malonyl-[ACP] + H(+) = 3-oxo-(5Z)-dodecenoyl-[ACP] + holo-[ACP] + CO2. It participates in lipid metabolism; fatty acid biosynthesis. In terms of biological role, involved in the type II fatty acid elongation cycle. Catalyzes the elongation of a wide range of acyl-ACP by the addition of two carbons from malonyl-ACP to an acyl acceptor. Can also use unsaturated fatty acids. Catalyzes a key reaction in unsaturated fatty acid (UFA) synthesis, the elongation of the cis-3-decenoyl-ACP produced by FabA. This Buchnera aphidicola subsp. Acyrthosiphon pisum (strain APS) (Acyrthosiphon pisum symbiotic bacterium) protein is 3-oxoacyl-[acyl-carrier-protein] synthase 1 (fabB).